The following is a 188-amino-acid chain: Acireductone dioxygenase (188 aa).

Positions 97, 99, 103, and 141 each coordinate Fe(2+). Ni(2+) is bound by residues His-97, His-99, Glu-103, and His-141.

This sequence belongs to the acireductone dioxygenase (ARD) family. Monomer. It depends on Fe(2+) as a cofactor. The cofactor is Ni(2+).

The catalysed reaction is 1,2-dihydroxy-5-(methylsulfanyl)pent-1-en-3-one + O2 = 3-(methylsulfanyl)propanoate + CO + formate + 2 H(+). It carries out the reaction 1,2-dihydroxy-5-(methylsulfanyl)pent-1-en-3-one + O2 = 4-methylsulfanyl-2-oxobutanoate + formate + 2 H(+). The protein operates within amino-acid biosynthesis; L-methionine biosynthesis via salvage pathway; L-methionine from S-methyl-5-thio-alpha-D-ribose 1-phosphate: step 5/6. Functionally, catalyzes 2 different reactions between oxygen and the acireductone 1,2-dihydroxy-3-keto-5-methylthiopentene (DHK-MTPene) depending upon the metal bound in the active site. Fe-containing acireductone dioxygenase (Fe-ARD) produces formate and 2-keto-4-methylthiobutyrate (KMTB), the alpha-ketoacid precursor of methionine in the methionine recycle pathway. Ni-containing acireductone dioxygenase (Ni-ARD) produces methylthiopropionate, carbon monoxide and formate, and does not lie on the methionine recycle pathway. The polypeptide is Acireductone dioxygenase (Xanthomonas euvesicatoria pv. vesicatoria (strain 85-10) (Xanthomonas campestris pv. vesicatoria)).